Here is a 379-residue protein sequence, read N- to C-terminus: Anhydro-N-acetylmuramic acid kinase (379 aa).

12–19 (GTSLDGMD) contacts ATP.

The protein belongs to the anhydro-N-acetylmuramic acid kinase family.

It catalyses the reaction 1,6-anhydro-N-acetyl-beta-muramate + ATP + H2O = N-acetyl-D-muramate 6-phosphate + ADP + H(+). It functions in the pathway amino-sugar metabolism; 1,6-anhydro-N-acetylmuramate degradation. Its pathway is cell wall biogenesis; peptidoglycan recycling. Its function is as follows. Catalyzes the specific phosphorylation of 1,6-anhydro-N-acetylmuramic acid (anhMurNAc) with the simultaneous cleavage of the 1,6-anhydro ring, generating MurNAc-6-P. Is required for the utilization of anhMurNAc either imported from the medium or derived from its own cell wall murein, and thus plays a role in cell wall recycling. The polypeptide is Anhydro-N-acetylmuramic acid kinase (Gloeobacter violaceus (strain ATCC 29082 / PCC 7421)).